The chain runs to 76 residues: uncharacterized protein (76 aa).

This is an uncharacterized protein from Mycobacterium tuberculosis (strain ATCC 25618 / H37Rv).